The sequence spans 569 residues: Ribosome-inactivating protein SNAI' (569 aa).

The N-terminal stretch at 1-28 (MKVVATILYLVVLAICGLGIHGAHPTHS) is a signal peptide. N-linked (GlcNAc...) asparagine glycosylation occurs at asparagine 40. Glutamate 201 is a catalytic residue. Disulfide bonds link cysteine 286–cysteine 311, cysteine 328–cysteine 347, and cysteine 369–cysteine 381. 2 Ricin B-type lectin domains span residues 315–435 (EEVT…WIVG) and 437–565 (VEPL…WIAS). A 1-alpha repeat occupies 325–365 (DGFCAEVKNGDEKDGTPVQLSSCGEQSNQQWTFSTDGTIQS). One copy of the 1-beta repeat lies at 366-401 (LGKCLTTSSSVMIYNCKVVPPESTKWVVSIDGTITN). One copy of the 1-gamma repeat lies at 404–436 (SGLVLTAPKAAEGTLVSLEKNVHAARQGWIVGN). The 2-alpha repeat unit spans residues 448-488 (EQMCLETNPGNNDVSLGDCSVKSASKVDQKWALYGDGTIRV). Cystine bridges form between cysteine 451-cysteine 466 and cysteine 495-cysteine 512. One copy of the 2-beta repeat lies at 492 to 530 (RSLCVTSEGKSSNEPIIILKCLGWANQRWVFNTDGTISN). A 2-gamma repeat occupies 533–566 (SKLVMHVDQNDVPLRKIILSHPSGTSNQQWIAST).

This sequence in the N-terminal section; belongs to the ribosome-inactivating protein family. Type 2 RIP subfamily. In terms of assembly, disulfide-linked dimer of A and B chains.

The enzyme catalyses Endohydrolysis of the N-glycosidic bond at one specific adenosine on the 28S rRNA.. Functionally, the A chain is responsible for inhibiting protein synthesis through the catalytic inactivation of 60S ribosomal subunits by removing adenine from position 4,324 of 28S rRNA. The B chain binds to cell receptors and probably facilitates the entry into the cell of the A chain; B chains are also responsible for cell agglutination (lectin activity). Agglutination is inhibited by Neu5Ac(alpha2,6)lactose, and N-linked glycoproteins such as fetuin and orosomucoid. In Sambucus nigra (European elder), this protein is Ribosome-inactivating protein SNAI'.